The chain runs to 370 residues: Coproporphyrin III ferrochelatase (370 aa).

Fe-coproporphyrin III contacts are provided by S58 and Y127. The Fe(2+) site is built by H189 and E276.

Belongs to the ferrochelatase family.

Its subcellular location is the cytoplasm. It carries out the reaction Fe-coproporphyrin III + 2 H(+) = coproporphyrin III + Fe(2+). It participates in porphyrin-containing compound metabolism; protoheme biosynthesis. Functionally, involved in coproporphyrin-dependent heme b biosynthesis. Catalyzes the insertion of ferrous iron into coproporphyrin III to form Fe-coproporphyrin III. In Corynebacterium glutamicum (strain R), this protein is Coproporphyrin III ferrochelatase.